The chain runs to 276 residues: Sulfur carrier protein FdhD (276 aa).

Cys122 serves as the catalytic Cysteine persulfide intermediate. 259–264 (FCKPGK) serves as a coordination point for Mo-bis(molybdopterin guanine dinucleotide).

The protein belongs to the FdhD family.

The protein resides in the cytoplasm. Functionally, required for formate dehydrogenase (FDH) activity. Acts as a sulfur carrier protein that transfers sulfur from IscS to the molybdenum cofactor prior to its insertion into FDH. The protein is Sulfur carrier protein FdhD of Photorhabdus laumondii subsp. laumondii (strain DSM 15139 / CIP 105565 / TT01) (Photorhabdus luminescens subsp. laumondii).